The chain runs to 242 residues: tRNA pseudouridine synthase A (242 aa).

The active-site Nucleophile is the Asp51. Substrate is bound at residue Tyr107.

It belongs to the tRNA pseudouridine synthase TruA family. In terms of assembly, homodimer.

The catalysed reaction is uridine(38/39/40) in tRNA = pseudouridine(38/39/40) in tRNA. In terms of biological role, formation of pseudouridine at positions 38, 39 and 40 in the anticodon stem and loop of transfer RNAs. In Helicobacter pylori (strain J99 / ATCC 700824) (Campylobacter pylori J99), this protein is tRNA pseudouridine synthase A.